A 692-amino-acid chain; its full sequence is Paramyosin (692 aa).

The tract at residues 1–15 (MNKKRDSELAKLRKL) is nonhelical region. Positions 16 to 692 (LEDVHIESEE…DHRVKELLLQ (677 aa)) form a coiled coil. Residues 26–57 (TAHHLRQKHQAAIQEMQDQLDQLQKAKNKSDK) are disordered.

Belongs to the paramyosin family. As to quaternary structure, homodimer.

Its subcellular location is the cytoplasm. The protein localises to the myofibril. Its function is as follows. Paramyosin is a major structural component of many thick filaments isolated from invertebrate muscles. The sequence is that of Paramyosin from Dermatophagoides farinae (American house dust mite).